Here is a 941-residue protein sequence, read N- to C-terminus: Isoleucine--tRNA ligase (941 aa).

The 'HIGH' region motif lies at proline 59–histidine 69. An L-isoleucyl-5'-AMP-binding site is contributed by glutamate 562. The 'KMSKS' region signature appears at lysine 603–serine 607. Position 606 (lysine 606) interacts with ATP. Positions 904, 907, 924, and 927 each coordinate Zn(2+).

The protein belongs to the class-I aminoacyl-tRNA synthetase family. IleS type 1 subfamily. As to quaternary structure, monomer. Zn(2+) is required as a cofactor.

The protein localises to the cytoplasm. The enzyme catalyses tRNA(Ile) + L-isoleucine + ATP = L-isoleucyl-tRNA(Ile) + AMP + diphosphate. Catalyzes the attachment of isoleucine to tRNA(Ile). As IleRS can inadvertently accommodate and process structurally similar amino acids such as valine, to avoid such errors it has two additional distinct tRNA(Ile)-dependent editing activities. One activity is designated as 'pretransfer' editing and involves the hydrolysis of activated Val-AMP. The other activity is designated 'posttransfer' editing and involves deacylation of mischarged Val-tRNA(Ile). The chain is Isoleucine--tRNA ligase from Haemophilus influenzae (strain 86-028NP).